Here is a 529-residue protein sequence, read N- to C-terminus: UDP-glucuronosyltransferase 2B23 (529 aa).

Residues 1–24 (MSVKWTSVILLIQLSFYFSSGSCG) form the signal peptide. 2 N-linked (GlcNAc...) asparagine glycosylation sites follow: N67 and N68. A helical membrane pass occupies residues 494–514 (IGFLLACVATVIFIIMKCCLF).

The protein belongs to the UDP-glycosyltransferase family. Expressed in several tissues, including the prostate, mammary gland, epididymis, testis and ovary.

It is found in the microsome membrane. It localises to the endoplasmic reticulum membrane. It catalyses the reaction glucuronate acceptor + UDP-alpha-D-glucuronate = acceptor beta-D-glucuronoside + UDP + H(+). Functionally, UDPGTs are of major importance in the conjugation and subsequent elimination of potentially toxic xenobiotics and endogenous compounds. This isozyme has glucuronidating capacity on 6 steroids and the bile acid, hyodeoxycholic acid. May potentially play an important role in estrogen and androgen catabolism in peripheral steroid target tissues. This chain is UDP-glucuronosyltransferase 2B23 (UGT2B23), found in Macaca fascicularis (Crab-eating macaque).